Reading from the N-terminus, the 285-residue chain is Golgi phosphoprotein 3-like (285 aa).

The tract at residues 1–43 (MTTLTHRTRRTEVSKSCEKKIESEEDTNQERSPDNEDPGDSKD) is disordered. Residues 10-43 (RTEVSKSCEKKIESEEDTNQERSPDNEDPGDSKD) are compositionally biased toward basic and acidic residues. Residues tryptophan 67 and arginine 76 each coordinate a 1,2-diacyl-sn-glycero-3-phospho-(1D-myo-inositol 4-phosphate). Serine 112 carries the phosphoserine modification. Residues arginine 157 and arginine 160 each coordinate a 1,2-diacyl-sn-glycero-3-phospho-(1D-myo-inositol 4-phosphate). The interval 176–187 (EKQNFLLFDMTT) is beta-hairpin required for oligomerization.

Belongs to the GOLPH3/VPS74 family. Homooligomer. Does not interact MYO18; differs from GOLPH3 by its inability to interact with MYO18. May interact with ARF1.

The protein localises to the golgi apparatus. The protein resides in the golgi stack membrane. It localises to the trans-Golgi network membrane. In terms of biological role, phosphatidylinositol-4-phosphate-binding protein that may antagonize the action of GOLPH3 which is required for the process of vesicle budding at the Golgi and anterograde transport to the plasma membrane. This chain is Golgi phosphoprotein 3-like (Golph3l), found in Rattus norvegicus (Rat).